The sequence spans 444 residues: 23S rRNA (uracil(1939)-C(5))-methyltransferase RlmD (444 aa).

In terms of domain architecture, TRAM spans 11 to 70; that stretch reads NSIKNHILKNIKVEKLDHRGRGLAYFQNKPLFIDGALAGELLEVQIVESKKRYSKGKIKK. The [4Fe-4S] cluster site is built by Cys-83, Cys-89, Cys-92, and Cys-171. S-adenosyl-L-methionine contacts are provided by Gln-277, Phe-306, Asn-311, Glu-327, Asp-354, and Asp-376. The active-site Nucleophile is Cys-402.

It belongs to the class I-like SAM-binding methyltransferase superfamily. RNA M5U methyltransferase family. RlmD subfamily.

The enzyme catalyses uridine(1939) in 23S rRNA + S-adenosyl-L-methionine = 5-methyluridine(1939) in 23S rRNA + S-adenosyl-L-homocysteine + H(+). Catalyzes the formation of 5-methyl-uridine at position 1939 (m5U1939) in 23S rRNA. This chain is 23S rRNA (uracil(1939)-C(5))-methyltransferase RlmD, found in Psychromonas ingrahamii (strain DSM 17664 / CCUG 51855 / 37).